A 336-amino-acid polypeptide reads, in one-letter code: Glyceraldehyde-3-phosphate dehydrogenase (336 aa).

Residues 12–13 (RI), Asp34, Arg78, and Thr121 contribute to the NAD(+) site. D-glyceraldehyde 3-phosphate contacts are provided by residues 151-153 (SCT), Thr182, Arg199, 212-213 (TG), and Arg235. The Nucleophile role is filled by Cys152. Residue Asn316 coordinates NAD(+).

This sequence belongs to the glyceraldehyde-3-phosphate dehydrogenase family. Homotetramer.

It localises to the cytoplasm. It catalyses the reaction D-glyceraldehyde 3-phosphate + phosphate + NAD(+) = (2R)-3-phospho-glyceroyl phosphate + NADH + H(+). The protein operates within carbohydrate degradation; glycolysis; pyruvate from D-glyceraldehyde 3-phosphate: step 1/5. In terms of biological role, catalyzes the oxidative phosphorylation of glyceraldehyde 3-phosphate (G3P) to 1,3-bisphosphoglycerate (BPG) using the cofactor NAD. The first reaction step involves the formation of a hemiacetal intermediate between G3P and a cysteine residue, and this hemiacetal intermediate is then oxidized to a thioester, with concomitant reduction of NAD to NADH. The reduced NADH is then exchanged with the second NAD, and the thioester is attacked by a nucleophilic inorganic phosphate to produce BPG. This Streptococcus dysgalactiae subsp. equisimilis (Streptococcus equisimilis) protein is Glyceraldehyde-3-phosphate dehydrogenase (gap).